A 176-amino-acid chain; its full sequence is dCTP deaminase (176 aa).

DCTP contacts are provided by residues 102–107 (RSTFAR) and D118. E128 acts as the Proton donor/acceptor in catalysis. DCTP-binding residues include Y160 and Q167.

This sequence belongs to the dCTP deaminase family. As to quaternary structure, homotrimer.

The enzyme catalyses dCTP + H2O + H(+) = dUTP + NH4(+). It participates in pyrimidine metabolism; dUMP biosynthesis; dUMP from dCTP (dUTP route): step 1/2. Catalyzes the deamination of dCTP to dUTP. The chain is dCTP deaminase from Hyperthermus butylicus (strain DSM 5456 / JCM 9403 / PLM1-5).